Consider the following 615-residue polypeptide: Alpha-1,3-galactosidase B (615 aa).

A signal peptide spans 1-23 (MRTFLSLKTCLLSALLLCVNSIA). PbH1 repeat units follow at residues 282–313 (SKNI…HFMG), 423–445 (TPDA…LVST), 446–467 (PGKV…LIAG), 478–500 (VKDV…YQFC), 520–541 (HRNI…LFAR), and 543–573 (VNGL…TLEA).

It belongs to the glycosyl hydrolase 110 family. B subfamily.

It catalyses the reaction Hydrolysis of terminal, non-reducing branched (1-&gt;3)-alpha-D-galactosidic residues, producing free D-galactose.. The catalysed reaction is Hydrolysis of terminal, non-reducing linear (1-&gt;3)-alpha-D-galactosidic residues, producing free D-galactose.. The enzyme catalyses Hydrolysis of terminal, non-reducing alpha-D-galactose residues in alpha-D-galactosides, including galactose oligosaccharides, galactomannans and galactolipids.. Functionally, alpha-galactosidase. Removes both branched alpha-1,3-linked galactose residues of blood group B antigens and linear alpha-1,3-linked galactose structures. The polypeptide is Alpha-1,3-galactosidase B (glaB) (Bacteroides thetaiotaomicron (strain ATCC 29148 / DSM 2079 / JCM 5827 / CCUG 10774 / NCTC 10582 / VPI-5482 / E50)).